We begin with the raw amino-acid sequence, 913 residues long: MTTGSVLPLLLLGLSGALRAHREDLTVREACKAGFSEEGYTALISPNVLEGEKLLKVEFSSCVGTKGMQYETNSLDFKVGADGTVFATRELKIPSEQVAFTVTARERQSAEQWAAMVRLLVAQTSSAHSEHKKGQTVALDPSQPPNDTLLPWPQHQSSGGLRRQKRDWVIPPINVPENSRGPFPQQLVRIRSDKDNDIPIRYSITGVGADQPPMEVFNIDSMSGRMYVTRPMDREERASYHLRAHAVDMNGNKVENPIDLYIYVIDMNDNRPEFINQVYNGSVDEGSKPGTYVMTVTANDADDSTTANGMVRYRIVTQTPQSPSQNMFTINSETGDIVTVAAGLDREKVQQYTVIVQATDMEGNLNYGLSNTATAIITVTDVNDNPPEFTTSTFAGEVPENRIETVVANLTVMDRDQPHSPNWNAVYRIISGDPSGHFSVRTDPVTNEGMVTVVKAVDYELNRAFMLTVMVSNQAPLASGIQMSFQSTAGVTISVTDVNEAPYFPSNHKLIRLEEGVPAGTALTTFSAVDPDRFMQQAVRYSKLSDPANWLHINTSNGQITTAAILDRESLYTKNNVYEATFLAADNGIPPASGTGTLQIYLIDINDNAPQLLPKEAQICERPGLNAINITAADADMDPNIGPYVFELPFIPTTVRKNWTITRLNGDYAQLSLRILYLEAGVYDVPIIVTDSGNPPLSNTSVIKVKVCPCDENGDCTTVGAVAAAGLGTGAIVAILICIVILLIMVLLFVVWMKRREKERHTKQLLIDPEDDVRDNILKYDEEGGGEEDQDYDLSQLQQPEAMEHVLSKTPGVRRVDERPVGAEPQYPVRPVVPHPGDIGDFINEGLRAADNDPTAPPYDSLLVFDYEGSGSTAGSVSSLNSSSSGDQDYDYLNDWGPRFKKLADMYGGGEED.

Residues 1–20 (MTTGSVLPLLLLGLSGALRA) form the signal peptide. A propeptide spanning residues 21 to 166 (HREDLTVREA…SSGGLRRQKR (146 aa)) is cleaved from the precursor. N-linked (GlcNAc...) asparagine glycosylation occurs at Asn-146. 5 consecutive Cadherin domains span residues 167–274 (DWVI…RPEF), 275–389 (INQV…PPEF), 390–504 (TTST…APYF), 505–610 (PSNH…DNAP), and 611–721 (QLLP…TVGA). Residues 167–731 (DWVIPPINVP…VAAAGLGTGA (565 aa)) are Extracellular-facing. N-linked (GlcNAc...) asparagine glycosylation is found at Asn-280, Asn-409, Asn-554, Asn-629, Asn-658, and Asn-699. The chain crosses the membrane as a helical span at residues 732–753 (IVAILICIVILLIMVLLFVVWM). Residues 754–913 (KRREKERHTK…ADMYGGGEED (160 aa)) lie on the Cytoplasmic side of the membrane.

Distributed widely in mouse tissues with high levels present in brain, skeletal muscle and thymus.

The protein localises to the cell membrane. In terms of biological role, cadherins are calcium-dependent cell adhesion proteins. They preferentially interact with themselves in a homophilic manner in connecting cells; cadherins may thus contribute to the sorting of heterogeneous cell types. May play an important role in retinal development. The sequence is that of Cadherin-4 (Cdh4) from Mus musculus (Mouse).